The chain runs to 215 residues: Uracil-DNA glycosylase (215 aa).

Asp59 serves as the catalytic Proton acceptor.

The protein belongs to the uracil-DNA glycosylase (UDG) superfamily. UNG family.

Its subcellular location is the cytoplasm. The catalysed reaction is Hydrolyzes single-stranded DNA or mismatched double-stranded DNA and polynucleotides, releasing free uracil.. Functionally, excises uracil residues from the DNA which can arise as a result of misincorporation of dUMP residues by DNA polymerase or due to deamination of cytosine. This chain is Uracil-DNA glycosylase, found in Aliarcobacter butzleri (strain RM4018) (Arcobacter butzleri).